The primary structure comprises 192 residues: MADTSDFRNGMTFIWKDDLWEIVDFLHVKPGKGGAFVRTTLKNVKDGHEVEETFRAGAKVDEVRVERREHQYLYEDDYGLHFMDQESYEQFSMPPEQVEGREFLKEGGDVDIVFRADTEEPLRTEVPQKVDLEVTETTPGVKGDTAQGGDKPATLESGATIDVPLFINEGDVVRLNTETEEYETRVSAASTV.

Residues 133–157 (EVTETTPGVKGDTAQGGDKPATLES) are disordered.

The protein belongs to the elongation factor P family.

The protein resides in the cytoplasm. Its pathway is protein biosynthesis; polypeptide chain elongation. Its function is as follows. Involved in peptide bond synthesis. Stimulates efficient translation and peptide-bond synthesis on native or reconstituted 70S ribosomes in vitro. Probably functions indirectly by altering the affinity of the ribosome for aminoacyl-tRNA, thus increasing their reactivity as acceptors for peptidyl transferase. This chain is Elongation factor P, found in Salinibacter ruber (strain DSM 13855 / M31).